Consider the following 336-residue polypeptide: COP9 signalosome complex subunit 5 (336 aa).

Positions 44–181 constitute an MPN domain; that stretch reads VRISSVAMIK…IGAFRTIPEG (138 aa). The Zn(2+) site is built by H127, H129, and D140. A JAMM motif motif is present at residues 127–140; sequence HSHPGYGCWLSGID.

This sequence belongs to the peptidase M67A family. CSN5 subfamily. Component of the COP9 signalosome (CSN) complex.

The protein localises to the cytoplasm. The protein resides in the nucleus. Catalytic component of the COP9 signalosome (CSN) complex that acts as an regulator of the ubiquitin (Ubl) conjugation pathway by mediating the deneddylation of the cullin subunit of SCF-type E3 ubiquitin-protein ligase complexes. The CSN complex is involved in the regulation of the circadian clock through its control of the stability of the SCF(FWD-1) complex. This is COP9 signalosome complex subunit 5 (csn-5) from Neurospora crassa (strain ATCC 24698 / 74-OR23-1A / CBS 708.71 / DSM 1257 / FGSC 987).